The primary structure comprises 351 residues: UDP-N-acetylglucosamine--N-acetylmuramyl-(pentapeptide) pyrophosphoryl-undecaprenol N-acetylglucosamine transferase (351 aa).

Residues 12–14, Asn-124, Arg-160, Ser-188, Ile-239, 258–263, and Gln-283 each bind UDP-N-acetyl-alpha-D-glucosamine; these read TGG and ALTVCE.

It belongs to the glycosyltransferase 28 family. MurG subfamily.

The protein localises to the cell inner membrane. It carries out the reaction di-trans,octa-cis-undecaprenyl diphospho-N-acetyl-alpha-D-muramoyl-L-alanyl-D-glutamyl-meso-2,6-diaminopimeloyl-D-alanyl-D-alanine + UDP-N-acetyl-alpha-D-glucosamine = di-trans,octa-cis-undecaprenyl diphospho-[N-acetyl-alpha-D-glucosaminyl-(1-&gt;4)]-N-acetyl-alpha-D-muramoyl-L-alanyl-D-glutamyl-meso-2,6-diaminopimeloyl-D-alanyl-D-alanine + UDP + H(+). It functions in the pathway cell wall biogenesis; peptidoglycan biosynthesis. Its function is as follows. Cell wall formation. Catalyzes the transfer of a GlcNAc subunit on undecaprenyl-pyrophosphoryl-MurNAc-pentapeptide (lipid intermediate I) to form undecaprenyl-pyrophosphoryl-MurNAc-(pentapeptide)GlcNAc (lipid intermediate II). The polypeptide is UDP-N-acetylglucosamine--N-acetylmuramyl-(pentapeptide) pyrophosphoryl-undecaprenol N-acetylglucosamine transferase (Actinobacillus pleuropneumoniae serotype 7 (strain AP76)).